We begin with the raw amino-acid sequence, 75 residues long: Translational regulator CsrA (75 aa).

The protein belongs to the CsrA/RsmA family. Homodimer; the beta-strands of each monomer intercalate to form a hydrophobic core, while the alpha-helices form wings that extend away from the core. Interacts with FliW.

Its subcellular location is the cytoplasm. A translational regulator that binds mRNA to regulate translation initiation and/or mRNA stability. Usually binds in the 5'-UTR at or near the Shine-Dalgarno sequence preventing ribosome-binding, thus repressing translation. Its function is probably anatagonized by FliW. Inhibits translation of flaA mRNA in vitro. Involved in post-transcriptional regulation of flagellin biosynthesis. In Campylobacter jejuni subsp. jejuni serotype O:6 (strain 81116 / NCTC 11828), this protein is Translational regulator CsrA.